The primary structure comprises 484 residues: tRNA sulfurtransferase (484 aa).

The THUMP domain occupies arginine 63–glutamine 167. Residues leucine 185–methionine 186, lysine 267, glycine 289, and glutamine 298 contribute to the ATP site. A disulfide bond links cysteine 346 and cysteine 457. In terms of domain architecture, Rhodanese spans valine 405–proline 483. Residue cysteine 457 is the Cysteine persulfide intermediate of the active site.

It belongs to the ThiI family.

The protein localises to the cytoplasm. It catalyses the reaction [ThiI sulfur-carrier protein]-S-sulfanyl-L-cysteine + a uridine in tRNA + 2 reduced [2Fe-2S]-[ferredoxin] + ATP + H(+) = [ThiI sulfur-carrier protein]-L-cysteine + a 4-thiouridine in tRNA + 2 oxidized [2Fe-2S]-[ferredoxin] + AMP + diphosphate. It carries out the reaction [ThiS sulfur-carrier protein]-C-terminal Gly-Gly-AMP + S-sulfanyl-L-cysteinyl-[cysteine desulfurase] + AH2 = [ThiS sulfur-carrier protein]-C-terminal-Gly-aminoethanethioate + L-cysteinyl-[cysteine desulfurase] + A + AMP + 2 H(+). It functions in the pathway cofactor biosynthesis; thiamine diphosphate biosynthesis. Catalyzes the ATP-dependent transfer of a sulfur to tRNA to produce 4-thiouridine in position 8 of tRNAs, which functions as a near-UV photosensor. Also catalyzes the transfer of sulfur to the sulfur carrier protein ThiS, forming ThiS-thiocarboxylate. This is a step in the synthesis of thiazole, in the thiamine biosynthesis pathway. The sulfur is donated as persulfide by IscS. The polypeptide is tRNA sulfurtransferase (Pseudomonas paraeruginosa (strain DSM 24068 / PA7) (Pseudomonas aeruginosa (strain PA7))).